The chain runs to 353 residues: Mitochondrial import inner membrane translocase subunit TIM50 (353 aa).

The N-terminal 44 residues, 1 to 44 (MAASAAVFSRLRSGLRLGSRGLCTRLATPPRRAPDQAAEIGSRG), are a transit peptide targeting the mitochondrion. Residues 25-60 (RLATPPRRAPDQAAEIGSRGSTKAQGPQQQPGSEGP) form a disordered region. Phosphoserine is present on Ser45. The Mitochondrial matrix segment spans residues 45-65 (STKAQGPQQQPGSEGPSYAKK). Low complexity predominate over residues 49 to 60 (QGPQQQPGSEGP). Residues 66–86 (VALWLAGLLGAGGTVSVVYIF) form a helical membrane-spanning segment. Residues 87–353 (GNNPVDENGA…SRLWPRSKQP (267 aa)) lie on the Mitochondrial intermembrane side of the membrane. One can recognise an FCP1 homology domain in the interval 143–286 (YYQPPYTLVL…LDLSAFLKTI (144 aa)). Ser341 bears the Phosphoserine mark.

This sequence belongs to the TIM50 family. In terms of assembly, component of the TIM23 complex at least composed of TIMM23, TIMM17 (TIMM17A or TIMM17B) and TIMM50; within this complex, directly interacts with TIMM23. The complex interacts with the TIMM44 component of the PAM complex and with DNAJC15. Interacts with COIL and snRNPs. In terms of tissue distribution, widely expressed. Expressed at higher level in brain, kidney and liver (at protein level).

Its subcellular location is the mitochondrion inner membrane. The protein localises to the nucleus speckle. Functionally, essential component of the TIM23 complex, a complex that mediates the translocation of transit peptide-containing proteins across the mitochondrial inner membrane. Has some phosphatase activity in vitro; however such activity may not be relevant in vivo. May participate in the release of snRNPs and SMN from the Cajal body. The chain is Mitochondrial import inner membrane translocase subunit TIM50 (TIMM50) from Homo sapiens (Human).